We begin with the raw amino-acid sequence, 717 residues long: Glutamate--cysteine ligase (717 aa).

The tract at residues 484 to 576 is disordered; sequence SKTTEQRAAK…TDSDHTDTDD (93 aa). 2 stretches are compositionally biased toward low complexity: residues 492-518 and 551-567; these read AKAQ…NGNG and GTTN…SNGT.

The protein belongs to the glutamate--cysteine ligase type 3 family.

The catalysed reaction is L-cysteine + L-glutamate + ATP = gamma-L-glutamyl-L-cysteine + ADP + phosphate + H(+). It carries out the reaction (2S)-2-aminobutanoate + L-glutamate + ATP = gamma-L-glutamyl-(2S)-2-aminobutanoate + ADP + phosphate + H(+). It participates in sulfur metabolism; glutathione biosynthesis; glutathione from L-cysteine and L-glutamate: step 1/2. Catalyzes the ATP-dependent ligation of L-glutamate and L-cysteine and participates in the first and rate-limiting step in glutathione biosynthesis. This chain is Glutamate--cysteine ligase, found in Drosophila melanogaster (Fruit fly).